Here is a 210-residue protein sequence, read N- to C-terminus: MARFGAVIHRVFLPLLLLLVVLGACHVTPAAAAAGARLSALAKALVVEASPRAGQVLHAGEDAITVTWSLNATAAAAAAGADAGYKAVKVTLCYAPASQVGRGWRKAHDDLSKDKACQFKIAQQPYDGAGKFEYTVARDVPTASYYVRAYALDASGARVAYGETAPSASFAVAGITGVTASIEVAAGVLSAFSVAALAVFLVLENKKKNK.

The N-terminal stretch at 1 to 23 (MARFGAVIHRVFLPLLLLLVVLG) is a signal peptide. The chain crosses the membrane as a helical span at residues 182–202 (IEVAAGVLSAFSVAALAVFLV).

Belongs to the NAR2 family.

The protein localises to the cell membrane. Involved in nitrate transport. This Oryza sativa subsp. japonica (Rice) protein is Probable high-affinity nitrate transporter-activating protein 2.2 (NAR2.2).